The chain runs to 526 residues: Phosphoenolpyruvate carboxylase (526 aa).

It belongs to the PEPCase type 2 family. As to quaternary structure, homotetramer. Requires Mg(2+) as cofactor.

It catalyses the reaction oxaloacetate + phosphate = phosphoenolpyruvate + hydrogencarbonate. Functionally, catalyzes the irreversible beta-carboxylation of phosphoenolpyruvate (PEP) to form oxaloacetate (OAA), a four-carbon dicarboxylic acid source for the tricarboxylic acid cycle. The sequence is that of Phosphoenolpyruvate carboxylase from Methanosarcina mazei (strain ATCC BAA-159 / DSM 3647 / Goe1 / Go1 / JCM 11833 / OCM 88) (Methanosarcina frisia).